Here is a 121-residue protein sequence, read N- to C-terminus: Ubiquitin-related modifier 1 (121 aa).

Gly121 is modified (1-thioglycine). Gly121 is covalently cross-linked (Glycyl lysine isopeptide (Gly-Lys) (interchain with K-? in acceptor proteins)).

This sequence belongs to the URM1 family. C-terminal thiocarboxylation occurs in 2 steps, it is first acyl-adenylated (-COAMP) via the hesA/moeB/thiF part of UBA4, then thiocarboxylated (-COSH) via the rhodanese domain of UBA4.

Its subcellular location is the cytoplasm. It participates in tRNA modification; 5-methoxycarbonylmethyl-2-thiouridine-tRNA biosynthesis. Functionally, acts as a sulfur carrier required for 2-thiolation of mcm(5)S(2)U at tRNA wobble positions of cytosolic tRNA(Lys), tRNA(Glu) and tRNA(Gln). Serves as sulfur donor in tRNA 2-thiolation reaction by being thiocarboxylated (-COSH) at its C-terminus by the MOCS3 homolog UBA4. The sulfur is then transferred to tRNA to form 2-thiolation of mcm(5)S(2)U. Prior mcm(5) tRNA modification by the elongator complex is required for 2-thiolation. Also acts as a ubiquitin-like protein (UBL) that is covalently conjugated via an isopeptide bond to lysine residues of target proteins such as AHP1. The thiocarboxylated form serves as substrate for conjugation and oxidative stress specifically induces the formation of UBL-protein conjugates. The protein is Ubiquitin-related modifier 1 of Ajellomyces capsulatus (strain NAm1 / WU24) (Darling's disease fungus).